The sequence spans 353 residues: Trans-enoyl reductase eqxC (353 aa).

Residue 45 to 48 (VDTK) participates in NADP(+) binding. 131-138 (ISFMTTGL) is a binding site for substrate. NADP(+) is bound by residues 166-169 (SSAT), 189-192 (SPRN), tyrosine 207, and 254-255 (LE). 275-279 (GPQML) serves as a coordination point for substrate. 344–345 (IS) is a binding site for NADP(+).

This sequence belongs to the zinc-containing alcohol dehydrogenase family. In terms of assembly, monomer.

The enzyme catalyses L-serine + 7 malonyl-CoA + acetyl-CoA + 2 S-adenosyl-L-methionine + ATP + 8 NADPH + 11 H(+) = (5S)-3-[(2E,6R,8E,10E,12E)-2,6-dimethyltetradeca-2,8,10,12-tetraenoyl]-5-(hydroxymethyl)pyrrolidine-2,4-dione + AMP + 2 S-adenosyl-L-homocysteine + 7 CO2 + diphosphate + 8 NADP(+) + 8 CoA + 6 H2O. The protein operates within mycotoxin biosynthesis. Its function is as follows. Trans-enoyl reductase; part of the gene cluster that mediates the biosynthesis of equisetin, a trans-fused decalin-containing tetramic acid with antimicrobial activity. The PKS module of eqxS together with the enoylreductase eqxC catalyze the formation of the polyketide unit which is then conjugated to L-serine by the condensation domain of the eqxS NRPS module. Activity of the Dieckmann cyclase domain (RED) results in release of the Dieckmann product intermediate. Diels-Alderase eqx3 is involved in endo-selective Diels-Alder cycloaddition to form the decalin ring, leading to the production of N-desmethylequisetin also called trichosetin. Subsequent N-methylation is carried out by eqxD to give equisetin. The chain is Trans-enoyl reductase eqxC from Fusarium heterosporum.